The chain runs to 150 residues: Protein NrdI (150 aa).

It belongs to the NrdI family.

Its function is as follows. Probably involved in ribonucleotide reductase function. The chain is Protein NrdI from Mycobacterium avium (strain 104).